Consider the following 53-residue polypeptide: ATP synthase protein 8 (53 aa).

Residues 9–29 (WIFFLFFFICIFLIFNIMNYF) form a helical membrane-spanning segment.

It belongs to the ATPase protein 8 family. In terms of assembly, F-type ATPases have 2 components, CF(1) - the catalytic core - and CF(0) - the membrane proton channel.

The protein resides in the mitochondrion membrane. Functionally, mitochondrial membrane ATP synthase (F(1)F(0) ATP synthase or Complex V) produces ATP from ADP in the presence of a proton gradient across the membrane which is generated by electron transport complexes of the respiratory chain. F-type ATPases consist of two structural domains, F(1) - containing the extramembraneous catalytic core and F(0) - containing the membrane proton channel, linked together by a central stalk and a peripheral stalk. During catalysis, ATP synthesis in the catalytic domain of F(1) is coupled via a rotary mechanism of the central stalk subunits to proton translocation. Part of the complex F(0) domain. Minor subunit located with subunit a in the membrane. In Bombyx mori (Silk moth), this protein is ATP synthase protein 8 (mt:ATPase8).